The following is a 243-amino-acid chain: MSIERITYDNFQNDPFINELDINDETKGAYEILKWAYQTYENDIVYSCSFGAESMVLIDLISQIKPDAQIVFLDTDLHFQETYDLIDRVKDKYPQLRIKMKKPELTLEEQGEKYNPALWKNDPNQCCYIRKIKPLEDVLSGAVAWISGLRRAQSPTRAHTNFINKDERFKSIKVCPLIYWTEEEVWSYIRDKDLPYNELHDQNYPSIGCIPCTSPVFDSNDSRAGRWSNSSKTECGLHVADKP.

[4Fe-4S] cluster-binding residues include Cys126, Cys127, Cys209, and Cys212. The active-site Nucleophile; cysteine thiosulfonate intermediate is Cys235.

Belongs to the PAPS reductase family. CysH subfamily. Requires [4Fe-4S] cluster as cofactor.

Its subcellular location is the cytoplasm. It carries out the reaction [thioredoxin]-disulfide + sulfite + AMP + 2 H(+) = adenosine 5'-phosphosulfate + [thioredoxin]-dithiol. It participates in sulfur metabolism; hydrogen sulfide biosynthesis; sulfite from sulfate. In terms of biological role, catalyzes the formation of sulfite from adenosine 5'-phosphosulfate (APS) using thioredoxin as an electron donor. The sequence is that of Adenosine 5'-phosphosulfate reductase from Staphylococcus epidermidis (strain ATCC 12228 / FDA PCI 1200).